Consider the following 512-residue polypeptide: GMP synthase [glutamine-hydrolyzing] (512 aa).

The Glutamine amidotransferase type-1 domain occupies 7–197 (TIIVLDFGSQ…VFGVCGCSEG (191 aa)). Catalysis depends on Cys-84, which acts as the Nucleophile. Active-site residues include His-171 and Glu-173. Positions 198-387 (WNMENFIEVE…LGIPDEIVWR (190 aa)) constitute a GMPS ATP-PPase domain. ATP is bound at residue 225-231 (SGGVDSS).

Homodimer.

It carries out the reaction XMP + L-glutamine + ATP + H2O = GMP + L-glutamate + AMP + diphosphate + 2 H(+). It participates in purine metabolism; GMP biosynthesis; GMP from XMP (L-Gln route): step 1/1. Catalyzes the synthesis of GMP from XMP. This chain is GMP synthase [glutamine-hydrolyzing], found in Bacillus anthracis.